We begin with the raw amino-acid sequence, 1037 residues long: Mediator of RNA polymerase II transcription subunit 14 (1037 aa).

It belongs to the Mediator complex subunit 14 family. As to quaternary structure, component of the Mediator complex.

The protein localises to the nucleus. In terms of biological role, component of the Mediator complex, a coactivator involved in the regulated transcription of nearly all RNA polymerase II-dependent genes. Mediator functions as a bridge to convey information from gene-specific regulatory proteins to the basal RNA polymerase II transcription machinery. Mediator is recruited to promoters by direct interactions with regulatory proteins and serves as a scaffold for the assembly of a functional preinitiation complex with RNA polymerase II and the general transcription factors. This chain is Mediator of RNA polymerase II transcription subunit 14 (RGR1), found in Candida glabrata (strain ATCC 2001 / BCRC 20586 / JCM 3761 / NBRC 0622 / NRRL Y-65 / CBS 138) (Yeast).